Here is a 210-residue protein sequence, read N- to C-terminus: MDFYYLPLSAPCRSVIMTAKALGIELNKKLLNLFEGEHLKPEFLKINPQHTIPTLVDNGFAMWESRAIMVYLVEKYGKQNDPLYPSCPKKRALINQRLYFDMGTLWKSYADYTYPQFRENKPADPELFKKFESALEFLNIFLSQSKYAAGQTMTLADLAILASVSTFDVVQMDLSKYEHILRWYNMLKDTAPGAAENWAGCLEMKKYFKK.

The 80-residue stretch at 1-80 (MDFYYLPLSA…YLVEKYGKQN (80 aa)) folds into the GST N-terminal domain. Glutathione contacts are provided by residues Ser9, 50–52 (HTI), and 64–66 (ESR). Residues 87-208 (CPKKRALINQ…AGCLEMKKYF (122 aa)) enclose the GST C-terminal domain.

Belongs to the GST superfamily. Theta family. Homodimer.

The enzyme catalyses RX + glutathione = an S-substituted glutathione + a halide anion + H(+). Functionally, conjugation of reduced glutathione to a wide number of exogenous and endogenous hydrophobic electrophiles. This chain is Glutathione S-transferase 3 (Gst3), found in Musca domestica (House fly).